The sequence spans 93 residues: MTEIKVPDLEQKALALLQADADKIYKLIDVQMENLTMPQCPLYEEVLDTQMFGLSREVEYAVRLGLISDDIGREIMGSLERKLAHLHELFNQR.

It belongs to the UPF0358 family.

In Brevibacillus brevis (strain 47 / JCM 6285 / NBRC 100599), this protein is UPF0358 protein BBR47_22520.